Here is a 977-residue protein sequence, read N- to C-terminus: Phosphatidylinositol 4-kinase PIK1alpha (977 aa).

One can recognise a PIK helical domain in the interval 1 to 125 (MSADITETPN…QAVRNLITKI (125 aa)). The interval 205–261 (MSADIPKGSHSDDETATSSSIKPSLSRSASVPRRNTKKTSLSFSSDESEAYTTDDDD) is disordered. Positions 220–233 (ATSSSIKPSLSRSA) are enriched in polar residues. Residues 250–261 (DESEAYTTDDDD) are compositionally biased toward acidic residues. Residues 679 to 960 (EDWNTKKQRI…FLIGKSLGSM (282 aa)) enclose the PI3K/PI4K catalytic domain. The segment at 685-691 (KQRIKKS) is G-loop. The interval 826 to 834 (QIKDRHNGN) is catalytic loop. An activation loop region spans residues 845–869 (HIDFGFLLSNSPGSVGFEAAPFKLT).

The protein belongs to the PI3/PI4-kinase family. Type III PI4K subfamily.

Its subcellular location is the nucleus. The enzyme catalyses a 1,2-diacyl-sn-glycero-3-phospho-(1D-myo-inositol) + ATP = a 1,2-diacyl-sn-glycero-3-phospho-(1D-myo-inositol 4-phosphate) + ADP + H(+). Acts on phosphatidylinositol (PI) in the first committed step in the production of the second messenger inositol 1,4,5,-trisphosphate. This Candida albicans (strain SC5314 / ATCC MYA-2876) (Yeast) protein is Phosphatidylinositol 4-kinase PIK1alpha (PIKALPHA).